The sequence spans 642 residues: Putative ankyrin repeat protein L91 (642 aa).

ANK repeat units lie at residues 42–76 (HFTKLMYLIINEKNSTNGHQKIIKYLKKKINVKNP), 85–118 (EGWTALMIASITCGQWCSIETVRLLLEHGANPNI), 153–186 (NGFTALSLACAVLDTGESVEVVELLLKYGTNVDS), 190–224 (NGETALIITCQNSKYFHSIFVIDLLLQNNANTLHK), 227–256 (NGFTALIHAVSHCPLNIVKLLVKNGSDVNA), 260–288 (EGKSVLMHSTKNSIDIVKYLLKKGAEINH), 292–322 (NDINVLFFASKNHVKSDVIMFLLAKCSNPNE), 326–360 (NKNAVLAHVCRQFNHHKNDIDTVKILLENRANPNI), 365–397 (SRTILMDICTDYQNENSLDIIEMLLKKGANVNA), 401–434 (EGRTALNYACMSINNKITIKIIKLLLKYNINVNH), 438–470 (DGAHILIDLCRNYSRYSLKVVKLLLEHGADVNI), 475–514 (KKWTPLFFANENLFSSSEKDPERCTKLIDLLIHYGANVNA), 518–550 (YGNNILMEDTTRNLECPNSITKHLLEKKINVNH), and 554–587 (NGDTSLLLVYERHELERAYSIAQFLLEHGCNPNI).

The polypeptide is Putative ankyrin repeat protein L91 (Acanthamoeba polyphaga (Amoeba)).